The chain runs to 59 residues: Single-pass membrane and coiled-coil domain-containing protein 4 (59 aa).

The interval 1-23 (MRQLKGKPKKETSKDKKERKQAM) is disordered. Basic and acidic residues predominate over residues 9–22 (KKETSKDKKERKQA). A coiled-coil region spans residues 9 to 31 (KKETSKDKKERKQAMQEARQQIT). Residues 32 to 52 (TVVLPTLAVVVLLIVVFVYVA) traverse the membrane as a helical segment.

Belongs to the SMCO4 family.

The protein localises to the membrane. The polypeptide is Single-pass membrane and coiled-coil domain-containing protein 4 (SMCO4) (Homo sapiens (Human)).